We begin with the raw amino-acid sequence, 172 residues long: Shikimate kinase (172 aa).

14–19 serves as a coordination point for ATP; the sequence is GAGKST. Position 18 (S18) interacts with Mg(2+). D36, R60, and G82 together coordinate substrate. R120 lines the ATP pocket. R139 is a binding site for substrate. Q156 contacts ATP.

Belongs to the shikimate kinase family. Monomer. The cofactor is Mg(2+).

The protein resides in the cytoplasm. It catalyses the reaction shikimate + ATP = 3-phosphoshikimate + ADP + H(+). The protein operates within metabolic intermediate biosynthesis; chorismate biosynthesis; chorismate from D-erythrose 4-phosphate and phosphoenolpyruvate: step 5/7. In terms of biological role, catalyzes the specific phosphorylation of the 3-hydroxyl group of shikimic acid using ATP as a cosubstrate. This is Shikimate kinase from Aliivibrio salmonicida (strain LFI1238) (Vibrio salmonicida (strain LFI1238)).